A 271-amino-acid chain; its full sequence is MEKSPLKIGILNVMHDKADTKTRLQHVLTHTAIPVDLHFYYPMTHYAGRTVPEAVSSILDPLDIHEVATMDGFIITGSPIETLEFDQVHYIAEVRTLLKTLSQHVPNQLYLCWGGMVALNYFFGISKLILPHKLFGVYPQTILEPHPLLKGLKNDFKSPHARYAEMDVRGIHADPRLTINATTTKGKLFMVTEPTDTQTFVFSHIEYDRWGLDSEYKREVAAHPEIDYVRAKHYYHHKNDYDHPKFNWKKTQRTIFDNWIQHVADHRNDNH.

Cys112 serves as the catalytic Acyl-thioester intermediate. The active-site Proton acceptor is His204. Residue Glu206 is part of the active site.

It belongs to the MetA family.

It carries out the reaction L-serine + acetyl-CoA = O-acetyl-L-serine + CoA. Its pathway is amino-acid biosynthesis; L-cysteine biosynthesis; L-cysteine from L-serine: step 1/2. Catalyzes the formation of O-acetylserine (OAS) from L-serine and acetyl-CoA. To a lesser extent, is also able to use succinyl-CoA and propionyl-CoA as acyl donors, but not butyryl-CoA. Does not acylate D-serine and L-homoserine. The sequence is that of Serine O-acetyltransferase from Lacticaseibacillus casei (Lactobacillus casei).